We begin with the raw amino-acid sequence, 118 residues long: MLTREDIFKHVKEKYGTSPDYPWEKYPNYASLRHTSNKKWYGLIMNVLPEKLGLDGHGEIDILNLKCPPEISDRLRNGENILPGYHMDKEHWISIVLERTDPEGEIYNLIEQSFHLTK.

This is an uncharacterized protein from Bacillus subtilis (strain 168).